We begin with the raw amino-acid sequence, 586 residues long: MEGIFNSKSLYEYLEEQKQAGISKTKEISLYYKATSKSVGDDEYSLRIWLDYIRLLMDGTKDVTEARETFKMIKMRFCKFYNYWEAYVRFEIEAGNGSLCKILQHSIDFVKVKEFTEKKRVLEYLECVMSYARNGEDLSVFCRGPETSFKPGAQVLSPFEARIGEQSKNKVLKKEHEESGPGHRDDGKNLLSRSGRAHLAPDECKENDNKNRAREDGASLSPSFAAKSKNCGATFGTIPIRFEKEDYSQGITMEINAALGRTSPEGSNSSPRSGAVRSRERIIIKGREIEILKQIGKGGSSKVYKVLFGSNVYALKRVELIGDEKMLSSYINEINLLYKFKGTSEIVEIIDHEVGEDYLHILLEYGETDLSKIIRKGGLSMNFIKDVWEQMLLIVKRVHIERIIHCDLKPANFLFVKGRVKLIDFGISKVIRNDTTSILSEEQCGTVNYMSPEAVTQNKSKVARSSDIWSLGCILYEMVHSNPPLHEYPNLIQKIQRLQEYSEFKYTSKNKAAVMVMKECLARDPKKRPTIDNLLNHRFLTGEMCLESLRELVEKILKIDGGDRVDPEHVDRIAEQLHSTHRQDQA.

Composition is skewed to basic and acidic residues over residues 167-188 (SKNK…DDGK) and 199-217 (LAPD…REDG). Residues 167 to 223 (SKNKVLKKEHEESGPGHRDDGKNLLSRSGRAHLAPDECKENDNKNRAREDGASLSPS) are disordered. Residues 289–540 (IEILKQIGKG…IDNLLNHRFL (252 aa)) form the Protein kinase domain. ATP is bound by residues 295 to 303 (IGKGGSSKV) and Lys-316. The Proton acceptor role is filled by Asp-407.

Belongs to the protein kinase superfamily. Ser/Thr protein kinase family.

The catalysed reaction is L-seryl-[protein] + ATP = O-phospho-L-seryl-[protein] + ADP + H(+). The enzyme catalyses L-threonyl-[protein] + ATP = O-phospho-L-threonyl-[protein] + ADP + H(+). It catalyses the reaction L-tyrosyl-[protein] + ATP = O-phospho-L-tyrosyl-[protein] + ADP + H(+). Its function is as follows. Involved in mitotic spindle assembly checkpoint signaling, a process that delays anaphase until chromosomes are bioriented on the spindle, and in the repair of incorrect mitotic kinetochore-spindle microtubule attachments. The polypeptide is Serine/threonine-protein kinase MPS1 (MPS1) (Encephalitozoon cuniculi (strain GB-M1) (Microsporidian parasite)).